Reading from the N-terminus, the 355-residue chain is Tetraacyldisaccharide 4'-kinase (355 aa).

49–56 (TAGGTGKT) contacts ATP.

The protein belongs to the LpxK family.

The enzyme catalyses a lipid A disaccharide + ATP = a lipid IVA + ADP + H(+). Its pathway is glycolipid biosynthesis; lipid IV(A) biosynthesis; lipid IV(A) from (3R)-3-hydroxytetradecanoyl-[acyl-carrier-protein] and UDP-N-acetyl-alpha-D-glucosamine: step 6/6. Transfers the gamma-phosphate of ATP to the 4'-position of a tetraacyldisaccharide 1-phosphate intermediate (termed DS-1-P) to form tetraacyldisaccharide 1,4'-bis-phosphate (lipid IVA). The chain is Tetraacyldisaccharide 4'-kinase from Chlorobium luteolum (strain DSM 273 / BCRC 81028 / 2530) (Pelodictyon luteolum).